Consider the following 119-residue polypeptide: Phosphoribosyl-AMP cyclohydrolase (119 aa).

Aspartate 78 contributes to the Mg(2+) binding site. A Zn(2+)-binding site is contributed by cysteine 79. Positions 80 and 82 each coordinate Mg(2+). Zn(2+) is bound by residues cysteine 95 and cysteine 102.

It belongs to the PRA-CH family. In terms of assembly, homodimer. The cofactor is Mg(2+). Requires Zn(2+) as cofactor.

It is found in the cytoplasm. The catalysed reaction is 1-(5-phospho-beta-D-ribosyl)-5'-AMP + H2O = 1-(5-phospho-beta-D-ribosyl)-5-[(5-phospho-beta-D-ribosylamino)methylideneamino]imidazole-4-carboxamide. The protein operates within amino-acid biosynthesis; L-histidine biosynthesis; L-histidine from 5-phospho-alpha-D-ribose 1-diphosphate: step 3/9. Its function is as follows. Catalyzes the hydrolysis of the adenine ring of phosphoribosyl-AMP. This Jannaschia sp. (strain CCS1) protein is Phosphoribosyl-AMP cyclohydrolase.